Consider the following 200-residue polypeptide: Large ribosomal subunit protein bL25 (200 aa).

Belongs to the bacterial ribosomal protein bL25 family. CTC subfamily. Part of the 50S ribosomal subunit; part of the 5S rRNA/L5/L18/L25 subcomplex. Contacts the 5S rRNA. Binds to the 5S rRNA independently of L5 and L18.

Functionally, this is one of the proteins that binds to the 5S RNA in the ribosome where it forms part of the central protuberance. In Pseudomonas fluorescens (strain Pf0-1), this protein is Large ribosomal subunit protein bL25.